The sequence spans 369 residues: MLAFNPLVTALAALIFLFCQANANPPLMQRLVHEYQWKTKQGLPRQGACTPHNLAVRREWSTLDVETRLEYIEAVKCLARLPSIIDPELAPGARSRFDDFQATHIRHTRTIHATGSFFAWHRHFVYLYEKALREECGYTGYQPYWEWSHWANLPITANPLYDGSNASLSGNGVYIPNRNGTLQLFPIPNPSPDTAIYTPPGTGGGYIYDGPLVDWELHLGPVLYSYDNGQYIPPNPRPDGLGYNPRPLIRDFNNTLLQQGASWDIILNMLVNVTDMHEFHPLFFQGPHLAGHIFISGVDNDIFTSPGDPLFWFHHAQVDRIWTIWQALDLETREYALDGTLTLLNCKNLPFRRILAGELTVCDDSTAQP.

The signal sequence occupies residues 1 to 23 (MLAFNPLVTALAALIFLFCQANA). Cu cation-binding residues include histidine 112 and histidine 121. N-linked (GlcNAc...) asparagine glycans are attached at residues asparagine 165, asparagine 179, asparagine 253, and asparagine 272. Histidine 315 provides a ligand contact to Cu cation.

Its pathway is secondary metabolite biosynthesis. Tyrosinase-like protein; part of the gene cluster that mediates the biosynthesis of orsellinic acid, as well as of the cathepsin K inhibitors F9775 A and F9775 B. The non-reducing polyketide synthase orsA produces orsellinic acid by condensing acetyl-CoA with 3 malonyl-CoA units. Further modifications by the decarboxylase orsB and the tyrosinase-like protein orsC lead to the production of F9775 A and F9775 B. The functions of orsD and orsE remain unclear since only orsB and orsC are required to convert orsellinic acid into F9775 A and F9775 B. The polypeptide is Tyrosinase-like protein orsC (Emericella nidulans (strain FGSC A4 / ATCC 38163 / CBS 112.46 / NRRL 194 / M139) (Aspergillus nidulans)).